We begin with the raw amino-acid sequence, 109 residues long: U-scoloptoxin(16)-Ssd1a (109 aa).

The signal sequence occupies residues 1–23; it reads MTTSATVIIMVLCVGSLVIFSEG.

Post-translationally, contains 4 disulfide bonds. In terms of tissue distribution, expressed by the venom gland.

It is found in the secreted. The chain is U-scoloptoxin(16)-Ssd1a from Scolopendra dehaani (Thai centipede).